Here is a 96-residue protein sequence, read N- to C-terminus: MGYMDEVNIKVGDYVVYINTGTKGRVVDIRKDENGDIWVVLDNNLMYRPHLLRVIDKSKITERKEDIDEVVKKLEKEELEEGKLIDLDLGDACGAG.

This is an uncharacterized protein from Methanocaldococcus jannaschii (strain ATCC 43067 / DSM 2661 / JAL-1 / JCM 10045 / NBRC 100440) (Methanococcus jannaschii).